A 315-amino-acid polypeptide reads, in one-letter code: ATP synthase gamma chain (315 aa).

The protein belongs to the ATPase gamma chain family. In terms of assembly, F-type ATPases have 2 components, CF(1) - the catalytic core - and CF(0) - the membrane proton channel. CF(1) has five subunits: alpha(3), beta(3), gamma(1), delta(1), epsilon(1). CF(0) has three main subunits: a, b and c.

It localises to the cellular thylakoid membrane. In terms of biological role, produces ATP from ADP in the presence of a proton gradient across the membrane. The gamma chain is believed to be important in regulating ATPase activity and the flow of protons through the CF(0) complex. The polypeptide is ATP synthase gamma chain (Microcystis aeruginosa (strain NIES-843 / IAM M-2473)).